A 515-amino-acid chain; its full sequence is 2-isopropylmalate synthase (515 aa).

In terms of domain architecture, Pyruvate carboxyltransferase spans 5–267 (VIIFDTTLRD…HTNLKHDEIH (263 aa)). Residues aspartate 14, histidine 202, histidine 204, and asparagine 238 each contribute to the Mn(2+) site. The regulatory domain stretch occupies residues 392 to 515 (KLNYLSVQSG…EIKQKKVETV (124 aa)).

The protein belongs to the alpha-IPM synthase/homocitrate synthase family. LeuA type 1 subfamily. In terms of assembly, homodimer. Mn(2+) is required as a cofactor.

It localises to the cytoplasm. It catalyses the reaction 3-methyl-2-oxobutanoate + acetyl-CoA + H2O = (2S)-2-isopropylmalate + CoA + H(+). Its pathway is amino-acid biosynthesis; L-leucine biosynthesis; L-leucine from 3-methyl-2-oxobutanoate: step 1/4. Catalyzes the condensation of the acetyl group of acetyl-CoA with 3-methyl-2-oxobutanoate (2-ketoisovalerate) to form 3-carboxy-3-hydroxy-4-methylpentanoate (2-isopropylmalate). The chain is 2-isopropylmalate synthase from Aliivibrio fischeri (strain MJ11) (Vibrio fischeri).